Reading from the N-terminus, the 383-residue chain is Succinyl-diaminopimelate desuccinylase (383 aa).

H79 lines the Zn(2+) pocket. D81 is an active-site residue. D110 contributes to the Zn(2+) binding site. E141 functions as the Proton acceptor in the catalytic mechanism. Residues E142, E170, and H355 each coordinate Zn(2+).

The protein belongs to the peptidase M20A family. DapE subfamily. Homodimer. Zn(2+) serves as cofactor. Requires Co(2+) as cofactor.

The enzyme catalyses N-succinyl-(2S,6S)-2,6-diaminopimelate + H2O = (2S,6S)-2,6-diaminopimelate + succinate. It functions in the pathway amino-acid biosynthesis; L-lysine biosynthesis via DAP pathway; LL-2,6-diaminopimelate from (S)-tetrahydrodipicolinate (succinylase route): step 3/3. Functionally, catalyzes the hydrolysis of N-succinyl-L,L-diaminopimelic acid (SDAP), forming succinate and LL-2,6-diaminopimelate (DAP), an intermediate involved in the bacterial biosynthesis of lysine and meso-diaminopimelic acid, an essential component of bacterial cell walls. This is Succinyl-diaminopimelate desuccinylase from Helicobacter pylori (strain Shi470).